The chain runs to 287 residues: uncharacterized protein (287 aa).

10 helical membrane passes run 4-24, 36-56, 66-86, 93-113, 122-142, 148-168, 179-199, 208-228, 237-259, and 264-286; these read TTNG…SLPA, FLTV…LLIF, LISL…LTAL, SAHA…FGVL, VFWI…LIQG, LGDA…AEGA, VISW…FFFT, VPAL…GFVF, GIAA…ASVI, and VGWA…RRFA. 2 consecutive EamA domains span residues 16–139 and 158–284; these read LIFS…GFAL and VVCG…AARR.

This sequence belongs to the EamA transporter family.

The protein localises to the cell membrane. This is an uncharacterized protein from Bacillus subtilis (strain 168).